The following is a 594-amino-acid chain: APOBEC1 complementation factor (594 aa).

RRM domains are found at residues 56–134 (CEIF…ASVD), 136–218 (CRLF…WAEP), and 231–303 (KILY…LAKP). A required for nuclear localization region spans residues 359–408 (HFPATKGHLSNRALIRTPSVREIYMNVPVGAAGVRGLGGRGYLAYTGLGR). A Phosphothreonine modification is found at Thr498.

In terms of assembly, part of the apolipoprotein B mRNA editing complex with APOBEC1. Interacts with TNPO2; TNPO2 may be responsible for transport of A1CF into the nucleus. Interacts with SYNCRIP. Interacts with CELF2/CUGBP2. Interacts with RBM47. Isoforms 1 and 2 are widely expressed while isoforms 3 and 4 are restricted to liver and small intestine.

It is found in the nucleus. It localises to the endoplasmic reticulum. The protein localises to the cytoplasm. Its function is as follows. Essential component of the apolipoprotein B mRNA editing enzyme complex which is responsible for the postranscriptional editing of a CAA codon for Gln to a UAA codon for stop in APOB mRNA. Binds to APOB mRNA and is probably responsible for docking the catalytic subunit, APOBEC1, to the mRNA to allow it to deaminate its target cytosine. The complex also seems to protect the edited APOB mRNA from nonsense-mediated decay. The polypeptide is APOBEC1 complementation factor (A1cf) (Rattus norvegicus (Rat)).